The sequence spans 290 residues: Acetyl-coenzyme A carboxylase carboxyl transferase subunit beta (290 aa).

The CoA carboxyltransferase N-terminal domain maps to 27–290 (LWVKCPSCES…LQKQPADAVA (264 aa)). 4 residues coordinate Zn(2+): C31, C34, C50, and C53. The C4-type zinc-finger motif lies at 31-53 (CPSCESTLYRTDVEANLHVCPKC).

Belongs to the AccD/PCCB family. As to quaternary structure, acetyl-CoA carboxylase is a heterohexamer composed of biotin carboxyl carrier protein (AccB), biotin carboxylase (AccC) and two subunits each of ACCase subunit alpha (AccA) and ACCase subunit beta (AccD). The cofactor is Zn(2+).

It is found in the cytoplasm. The enzyme catalyses N(6)-carboxybiotinyl-L-lysyl-[protein] + acetyl-CoA = N(6)-biotinyl-L-lysyl-[protein] + malonyl-CoA. It functions in the pathway lipid metabolism; malonyl-CoA biosynthesis; malonyl-CoA from acetyl-CoA: step 1/1. Functionally, component of the acetyl coenzyme A carboxylase (ACC) complex. Biotin carboxylase (BC) catalyzes the carboxylation of biotin on its carrier protein (BCCP) and then the CO(2) group is transferred by the transcarboxylase to acetyl-CoA to form malonyl-CoA. The polypeptide is Acetyl-coenzyme A carboxylase carboxyl transferase subunit beta (Cupriavidus taiwanensis (strain DSM 17343 / BCRC 17206 / CCUG 44338 / CIP 107171 / LMG 19424 / R1) (Ralstonia taiwanensis (strain LMG 19424))).